The primary structure comprises 1299 residues: DNA-directed RNA polymerase subunit beta' (1299 aa).

Residues C60, C62, C75, and C78 each coordinate Zn(2+). 3 residues coordinate Mg(2+): D535, D537, and D539. Zn(2+)-binding residues include C877, C954, C961, and C964.

Belongs to the RNA polymerase beta' chain family. The RNAP catalytic core consists of 2 alpha, 1 beta, 1 beta' and 1 omega subunit. When a sigma factor is associated with the core the holoenzyme is formed, which can initiate transcription. The cofactor is Mg(2+). Requires Zn(2+) as cofactor.

The catalysed reaction is RNA(n) + a ribonucleoside 5'-triphosphate = RNA(n+1) + diphosphate. Functionally, DNA-dependent RNA polymerase catalyzes the transcription of DNA into RNA using the four ribonucleoside triphosphates as substrates. The chain is DNA-directed RNA polymerase subunit beta' from Renibacterium salmoninarum (strain ATCC 33209 / DSM 20767 / JCM 11484 / NBRC 15589 / NCIMB 2235).